The following is a 98-amino-acid chain: NADH-ubiquinone oxidoreductase chain 4L (98 aa).

2 helical membrane-spanning segments follow: residues 1–21 and 48–68; these read MTLIHFSFCSAFILGLTGLAL and PLHLTIYLSSMMLYIMLPFAA.

It belongs to the complex I subunit 4L family. Core subunit of respiratory chain NADH dehydrogenase (Complex I) which is composed of 45 different subunits.

It localises to the mitochondrion inner membrane. It catalyses the reaction a ubiquinone + NADH + 5 H(+)(in) = a ubiquinol + NAD(+) + 4 H(+)(out). Functionally, core subunit of the mitochondrial membrane respiratory chain NADH dehydrogenase (Complex I) which catalyzes electron transfer from NADH through the respiratory chain, using ubiquinone as an electron acceptor. Part of the enzyme membrane arm which is embedded in the lipid bilayer and involved in proton translocation. This Xenopus laevis (African clawed frog) protein is NADH-ubiquinone oxidoreductase chain 4L (mt-nd4l).